Reading from the N-terminus, the 48-residue chain is ATP synthase protein 8 (48 aa).

A helical transmembrane segment spans residues 12–32; it reads LLTFGMLAISMLLYLVSTIIL.

It belongs to the ATPase protein 8 family. F-type ATPases have 2 components, CF(1) - the catalytic core - and CF(0) - the membrane proton channel.

Its subcellular location is the mitochondrion membrane. In terms of biological role, mitochondrial membrane ATP synthase (F(1)F(0) ATP synthase or Complex V) produces ATP from ADP in the presence of a proton gradient across the membrane which is generated by electron transport complexes of the respiratory chain. F-type ATPases consist of two structural domains, F(1) - containing the extramembraneous catalytic core and F(0) - containing the membrane proton channel, linked together by a central stalk and a peripheral stalk. During catalysis, ATP synthesis in the catalytic domain of F(1) is coupled via a rotary mechanism of the central stalk subunits to proton translocation. Part of the complex F(0) domain. Minor subunit located with subunit a in the membrane. The sequence is that of ATP synthase protein 8 (ATP8) from Debaryomyces hansenii (strain ATCC 36239 / CBS 767 / BCRC 21394 / JCM 1990 / NBRC 0083 / IGC 2968) (Yeast).